A 266-amino-acid polypeptide reads, in one-letter code: Mitochondrial genome maintenance protein MGM101 (266 aa).

A mitochondrion-targeting transit peptide spans 1–23 (MLHSTKLVFRATPQALCFPVRSY). Polar residues-rich tracts occupy residues 37–47 (KTTSKLAPSIT) and 57–68 (PSLQEPQSATST). The disordered stretch occupies residues 37–68 (KTTSKLAPSITTEDEVAEQDPSLQEPQSATST).

This sequence belongs to the MGM101 family. Forms homooligomers in vitro.

It localises to the mitochondrion matrix. It is found in the mitochondrion nucleoid. Plays a role in the replication of the mitochondrial genome and the maintenance of its telomeres. Able to catalyze strand annealing and D-loop formation. Binds a wide variety of DNA substrates. Exhibited the highest affinity for DNA molecules carrying 3' ssDNA overhangs (Y-form, 3' FLAP, 3' overhang) and for substrates with complex structures (X-O and Fork). Forms homogeneous ring-shaped structures at the ssDNA native telomeres ends. Oligomers seem to bind to the ssDNA as a filament until they reach the double-stranded region and induce the formation of bends and loops within the double-stranded part of the molecules. In Candida parapsilosis (strain CDC 317 / ATCC MYA-4646) (Yeast), this protein is Mitochondrial genome maintenance protein MGM101.